We begin with the raw amino-acid sequence, 199 residues long: Interleukin-11 (199 aa).

An N-terminal signal peptide occupies residues 1 to 21; sequence MNCVCRLVLVVLSLWPDTAVA. Residues 182 to 190 form an important for interaction with IL11RA and for the stimulation of cell proliferation region; that stretch reads HLTLDWAVR.

The protein belongs to the IL-6 superfamily. Interacts with IL11RA to associate with IL6ST, giving rise to a multimeric signaling complex.

Its subcellular location is the secreted. In terms of biological role, cytokine that stimulates the proliferation of hematopoietic stem cells and megakaryocyte progenitor cells and induces megakaryocyte maturation resulting in increased platelet production. Also promotes the proliferation of hepatocytes in response to liver damage. Binding to its receptor formed by IL6ST and IL11RA activates a signaling cascade that promotes cell proliferation. Signaling leads to the activation of intracellular protein kinases and the phosphorylation of STAT3. The interaction with the membrane-bound IL11RA and IL6ST stimulates 'classic signaling', whereas the binding of IL11 and soluble IL11RA to IL6ST stimulates 'trans-signaling'. In Homo sapiens (Human), this protein is Interleukin-11.